The following is a 632-amino-acid chain: Epsin-3 (632 aa).

6 residues coordinate a 1,2-diacyl-sn-glycero-3-phospho-(1D-myo-inositol-4,5-bisphosphate): R8, K11, R25, N30, R63, and H73. In terms of domain architecture, ENTH spans 12 to 144 (NIVHNYSEAE…KDEERLRQER (133 aa)). The segment at 172–214 (YGEDYSRSRGSPSSYNSSSSSPRYTSDLEQARPQTSGEEELQL) is disordered. Positions 179-196 (SRGSPSSYNSSSSSPRYT) are enriched in low complexity. S191 and S192 each carry phosphoserine. 2 UIM domains span residues 209–228 (EEELQLQLALAMSREEAEKP) and 236–255 (DEDLQLQLALRLSRQEHEKE). Positions 257–296 (RSWQGDGSPMANGAGAVVHHQRDREPEREERKEEEKLKTS) are disordered. S264 carries the phosphoserine modification. The span at 276-294 (HQRDREPEREERKEEEKLK) shows a compositional bias: basic and acidic residues. Tandem repeats lie at residues 321-323 (DPW), 344-346 (DPW), 371-373 (EPW), 387-389 (DPW), 404-406 (DPW), 524-526 (NPF), 537-539 (NPF), and 629-631 (NPF). Positions 321-406 (DPWDIPGFRP…KLPSTGADPW (86 aa)) are 5 X 3 AA repeats of [DE]-P-W. Disordered stretches follow at residues 326 to 501 (PGFR…SFLG), 525 to 560 (PFLTGLSAPSPTNPFGAGEPGRPTLNQMRTGSPALG), and 604 to 632 (AFAPQPLLPTPSSAGPRPPPPQTGTNPFL). Residues 353–371 (TVLSRSQPWDLTPMLSSSE) show a composition bias toward polar residues. Positions 524 to 631 (NPFLTGLSAP…PPPQTGTNPF (108 aa)) are 3 X 3 AA repeats of N-P-F.

This sequence belongs to the epsin family. As to expression, detected in migrating keratinocytes from wounded skin, but not in differentiating keratinocytes or in normal skin. Detected in chronic wounds, basal cell carcinoma and ulcerative colitis.

The protein resides in the cytoplasm. It is found in the perinuclear region. The protein localises to the cytoplasmic vesicle. Its subcellular location is the clathrin-coated vesicle. It localises to the nucleus. The chain is Epsin-3 (EPN3) from Homo sapiens (Human).